The following is an 849-amino-acid chain: Lysine-specific histone demethylase 1 homolog 1 (849 aa).

Residues 1–118 (MEEGSEAQPP…RRRRKKQFPG (118 aa)) form a disordered region. Low complexity-rich tracts occupy residues 34–67 (GQAAAAEAMEGEAEGAAAAAGTIEGEAGYAAADA) and 89–103 (PTSSAPSATAAVDDS). The span at 106-115 (ARKRRRRKKQ) shows a compositional bias: basic residues. The SWIRM domain occupies 159–260 (ARELDAEALI…FGLAPSVISL (102 aa)). FAD contacts are provided by Glu-300, Arg-302, Arg-308, and Glu-688.

It belongs to the flavin monoamine oxidase family. FAD serves as cofactor.

Functionally, probable histone demethylase. This Oryza sativa subsp. japonica (Rice) protein is Lysine-specific histone demethylase 1 homolog 1.